We begin with the raw amino-acid sequence, 432 residues long: Adenylosuccinate synthetase (432 aa).

Residues 12–18 (GDEGKGK) and 40–42 (GHT) each bind GTP. Aspartate 13 functions as the Proton acceptor in the catalytic mechanism. Mg(2+) contacts are provided by aspartate 13 and glycine 40. IMP is bound by residues 13–16 (DEGK), 38–41 (NAGH), threonine 129, arginine 143, glutamine 224, threonine 239, and arginine 303. Catalysis depends on histidine 41, which acts as the Proton donor. 299–305 (VTTGRRR) contacts substrate. Residues arginine 305, 331–333 (KLD), and 413–415 (GVG) contribute to the GTP site.

This sequence belongs to the adenylosuccinate synthetase family. As to quaternary structure, homodimer. It depends on Mg(2+) as a cofactor.

The protein localises to the cytoplasm. It catalyses the reaction IMP + L-aspartate + GTP = N(6)-(1,2-dicarboxyethyl)-AMP + GDP + phosphate + 2 H(+). It functions in the pathway purine metabolism; AMP biosynthesis via de novo pathway; AMP from IMP: step 1/2. In terms of biological role, plays an important role in the de novo pathway of purine nucleotide biosynthesis. Catalyzes the first committed step in the biosynthesis of AMP from IMP. The sequence is that of Adenylosuccinate synthetase from Mycobacterium tuberculosis (strain CDC 1551 / Oshkosh).